The sequence spans 207 residues: Large ribosomal subunit protein uL4 (207 aa).

Residues 49–78 (HAVKNRSAVSGGGRKPWRQKGTGRARQGSI) are disordered.

This sequence belongs to the universal ribosomal protein uL4 family. As to quaternary structure, part of the 50S ribosomal subunit.

Its function is as follows. One of the primary rRNA binding proteins, this protein initially binds near the 5'-end of the 23S rRNA. It is important during the early stages of 50S assembly. It makes multiple contacts with different domains of the 23S rRNA in the assembled 50S subunit and ribosome. Forms part of the polypeptide exit tunnel. This chain is Large ribosomal subunit protein uL4, found in Streptococcus agalactiae serotype Ia (strain ATCC 27591 / A909 / CDC SS700).